A 455-amino-acid chain; its full sequence is L-serine dehydratase (455 aa).

Belongs to the iron-sulfur dependent L-serine dehydratase family. [4Fe-4S] cluster serves as cofactor.

It catalyses the reaction L-serine = pyruvate + NH4(+). It participates in carbohydrate biosynthesis; gluconeogenesis. The sequence is that of L-serine dehydratase (sdaA) from Haemophilus influenzae (strain ATCC 51907 / DSM 11121 / KW20 / Rd).